The sequence spans 344 residues: Pre-mRNA polyadenylation factor fip1 (344 aa).

Disordered stretches follow at residues 1–99 and 230–344; these read MSNA…LSTA and NYNT…RNRY. The segment covering 28 to 38 has biased composition (polar residues); sequence VTVSNAKSPEQ. Over residues 39 to 50 the composition is skewed to acidic residues; the sequence is ASEESDDSDIEF. Residues 80 to 92 are compositionally biased toward basic and acidic residues; it reads QVEKTAVEVKTTE. A compositionally biased stretch (low complexity) spans 243-258; it reads SGAATPNAYVNNNPSS. A compositionally biased stretch (polar residues) spans 271 to 301; that stretch reads NITSSAGMTHAQPTHNPTSSYGNGASTNYNA. The segment covering 302–317 has biased composition (low complexity); the sequence is SRPPSNHPHSSNYPSS.

It belongs to the FIP1 family.

It localises to the nucleus. In terms of biological role, pre-mRNA polyadenylation factor that directly interacts with poly(A) polymerase. This chain is Pre-mRNA polyadenylation factor fip1, found in Schizosaccharomyces pombe (strain 972 / ATCC 24843) (Fission yeast).